Here is a 265-residue protein sequence, read N- to C-terminus: MIKLQKLKLYGFNNLTKSLSFCIYDICYANTNDSRNSYISYIDEQYNAIRLTKILKKTCSIIGANVLNIFHQDYEPQGASVTILVCEEPMSMEKIDALNKNIVSSSVLAHLDKSHICVHTYPESHPQSGICTFRADIEVSTCGIISPLNALNYLIHQLESDIVTIEYRVRGFTRDIHGIKHFIDHKINSIQNFMSDDIKSMYDMVDVNVYQENIFHTRMLLREFNLKNYLFNINLENLEKEERSYIMKLLSKEMREIYYGRNISR.

Residue serine 114 is the Schiff-base intermediate with substrate; via pyruvic acid of the active site. Serine 114 is subject to Pyruvic acid (Ser); by autocatalysis. Histidine 119 serves as the catalytic Proton acceptor; for processing activity. Catalysis depends on cysteine 142, which acts as the Proton donor; for catalytic activity.

Belongs to the prokaryotic AdoMetDC family. Type 2 subfamily. Heterooctamer of four alpha and four beta chains arranged as a tetramer of alpha/beta heterodimers. It depends on pyruvate as a cofactor. Post-translationally, is synthesized initially as an inactive proenzyme. Formation of the active enzyme involves a self-maturation process in which the active site pyruvoyl group is generated from an internal serine residue via an autocatalytic post-translational modification. Two non-identical subunits are generated from the proenzyme in this reaction, and the pyruvate is formed at the N-terminus of the alpha chain, which is derived from the carboxyl end of the proenzyme. The post-translation cleavage follows an unusual pathway, termed non-hydrolytic serinolysis, in which the side chain hydroxyl group of the serine supplies its oxygen atom to form the C-terminus of the beta chain, while the remainder of the serine residue undergoes an oxidative deamination to produce ammonia and the pyruvoyl group blocking the N-terminus of the alpha chain.

The catalysed reaction is S-adenosyl-L-methionine + H(+) = S-adenosyl 3-(methylsulfanyl)propylamine + CO2. It functions in the pathway amine and polyamine biosynthesis; S-adenosylmethioninamine biosynthesis; S-adenosylmethioninamine from S-adenosyl-L-methionine: step 1/1. Functionally, catalyzes the decarboxylation of S-adenosylmethionine to S-adenosylmethioninamine (dcAdoMet), the propylamine donor required for the synthesis of the polyamines spermine and spermidine from the diamine putrescine. This chain is S-adenosylmethionine decarboxylase proenzyme, found in Buchnera aphidicola subsp. Acyrthosiphon pisum (strain 5A).